The sequence spans 431 residues: Adenylosuccinate lyase (431 aa).

N(6)-(1,2-dicarboxyethyl)-AMP-binding positions include 4 to 5 (RY), 67 to 69 (NHD), and 93 to 94 (TS). Residue histidine 141 is the Proton donor/acceptor of the active site. Glutamine 212 serves as a coordination point for N(6)-(1,2-dicarboxyethyl)-AMP. Serine 262 acts as the Proton donor/acceptor in catalysis. Residues serine 263, 268–270 (KKN), and 307–311 (SVERY) contribute to the N(6)-(1,2-dicarboxyethyl)-AMP site.

The protein belongs to the lyase 1 family. Adenylosuccinate lyase subfamily. In terms of assembly, homotetramer. Residues from neighboring subunits contribute catalytic and substrate-binding residues to each active site.

It catalyses the reaction N(6)-(1,2-dicarboxyethyl)-AMP = fumarate + AMP. It carries out the reaction (2S)-2-[5-amino-1-(5-phospho-beta-D-ribosyl)imidazole-4-carboxamido]succinate = 5-amino-1-(5-phospho-beta-D-ribosyl)imidazole-4-carboxamide + fumarate. It functions in the pathway purine metabolism; AMP biosynthesis via de novo pathway; AMP from IMP: step 2/2. The protein operates within purine metabolism; IMP biosynthesis via de novo pathway; 5-amino-1-(5-phospho-D-ribosyl)imidazole-4-carboxamide from 5-amino-1-(5-phospho-D-ribosyl)imidazole-4-carboxylate: step 2/2. Catalyzes two reactions in de novo purine nucleotide biosynthesis. Catalyzes the breakdown of 5-aminoimidazole- (N-succinylocarboxamide) ribotide (SAICAR or 2-[5-amino-1-(5-phospho-beta-D-ribosyl)imidazole-4-carboxamido]succinate) to 5-aminoimidazole-4-carboxamide ribotide (AICAR or 5-amino-1-(5-phospho-beta-D-ribosyl)imidazole-4-carboxamide) and fumarate, and of adenylosuccinate (ADS or N(6)-(1,2-dicarboxyethyl)-AMP) to adenosine monophosphate (AMP) and fumarate. The polypeptide is Adenylosuccinate lyase (purB) (Thermotoga maritima (strain ATCC 43589 / DSM 3109 / JCM 10099 / NBRC 100826 / MSB8)).